Here is a 288-residue protein sequence, read N- to C-terminus: Acetyl-coenzyme A carboxylase carboxyl transferase subunit beta (288 aa).

Positions 30-288 (IMTKCPKCKK…KMHQEVKTNA (259 aa)) constitute a CoA carboxyltransferase N-terminal domain. Residues C34, C37, C53, and C56 each contribute to the Zn(2+) site. The C4-type zinc finger occupies 34–56 (CPKCKKIMYTKELAENLNVCFNC).

The protein belongs to the AccD/PCCB family. Acetyl-CoA carboxylase is a heterohexamer composed of biotin carboxyl carrier protein (AccB), biotin carboxylase (AccC) and two subunits each of ACCase subunit alpha (AccA) and ACCase subunit beta (AccD). Requires Zn(2+) as cofactor.

The protein resides in the cytoplasm. The enzyme catalyses N(6)-carboxybiotinyl-L-lysyl-[protein] + acetyl-CoA = N(6)-biotinyl-L-lysyl-[protein] + malonyl-CoA. The protein operates within lipid metabolism; malonyl-CoA biosynthesis; malonyl-CoA from acetyl-CoA: step 1/1. Its function is as follows. Component of the acetyl coenzyme A carboxylase (ACC) complex. Biotin carboxylase (BC) catalyzes the carboxylation of biotin on its carrier protein (BCCP) and then the CO(2) group is transferred by the transcarboxylase to acetyl-CoA to form malonyl-CoA. This Staphylococcus saprophyticus subsp. saprophyticus (strain ATCC 15305 / DSM 20229 / NCIMB 8711 / NCTC 7292 / S-41) protein is Acetyl-coenzyme A carboxylase carboxyl transferase subunit beta.